A 176-amino-acid polypeptide reads, in one-letter code: Viral interleukin-10 homolog (176 aa).

The signal sequence occupies residues 1 to 25 (MLSVMVSSSLVLIVFFLGASEEAKP). 2 disulfide bridges follow: Cys38–Cys128 and Cys82–Cys133. Asn152 is a glycosylation site (N-linked (GlcNAc...) asparagine; by host).

The protein belongs to the IL-10 family. Homodimer; disulfide-linked.

It localises to the secreted. Functional viral IL-10 homolog. Can bind to the human IL-10 receptor and compete with human IL-10 for binding sites. Requires both subunits of the human IL-10 receptor complex to induce signal transduction events and biological activities. IL-10 signaling pathway has several immunosuppressive activities that are exploited by the virus. Inhibits TLR-induced type I interferon production in host plasmacytoid dendritic cells. This Homo sapiens (Human) protein is Viral interleukin-10 homolog (UL111A).